Here is a 1035-residue protein sequence, read N- to C-terminus: Electrogenic sodium bicarbonate cotransporter 1 (1035 aa).

At 1 to 421 (MSSEKECLEN…FASDFYDALS (421 aa)) the chain is on the cytoplasmic side. Positions 192–217 (SRLFSTPDNGSPTMTHRNLTSTSLND) are enriched in polar residues. Disordered regions lie at residues 192–222 (SRLF…SDKP) and 348–389 (IEPP…GDSE). Basic and acidic residues predominate over residues 376 to 389 (APHDDGGGGHGDSE). A helical membrane pass occupies residues 422–446 (IQSLSAILFIYLGTVTNAITFGGLL). Topologically, residues 447–456 (GDATENMQGV) are extracellular. Residues 457-475 (LESFLGTAVSGAVFCLFGG) form a helical membrane-spanning segment. Gln-476 is a topological domain (cytoplasmic). The discontinuously helical transmembrane segment at 477 to 497 (PLTILSSTGPVLVFERLLFNF) threads the bilayer. Topologically, residues 498–505 (SKDNDFDY) are extracellular. The helical transmembrane segment at 506 to 526 (LEFRLWIGLWSAFQCLILVAT) threads the bilayer. Residues 527–540 (DASFLVKYFTRFTE) lie on the Cytoplasmic side of the membrane. The chain crosses the membrane as a helical span at residues 541–564 (EGFSSLISFIFIYDAFKKMIKLAD). Residues 565-648 (YYPINSHFKV…GSNCKYVPDI (84 aa)) lie on the Extracellular side of the membrane. Asn-591, Asn-596, Asn-609, and Asn-617 each carry an N-linked (GlcNAc...) asparagine glycan. The helical transmembrane segment at 649 to 666 (TLMSFILFLGTYTCSMAL) threads the bilayer. The Cytoplasmic portion of the chain corresponds to 667-681 (KKFKTSRYFPTTARK). The chain crosses the membrane as a helical span at residues 682–701 (LISDFAIILSILIFCGLDAL). At 702 to 735 (LGVDTPKLIVPSEFKPTSPNRGWFVPPFGGNPWW) the chain is on the extracellular side. A helical membrane pass occupies residues 736-763 (VYLAAAIPALLVTILIFMDQQITGVIVN). The Cytoplasmic portion of the chain corresponds to 764–775 (RKEHKLKKGAGY). Residues 776-792 (HLDLFWVAILMVVCSFM) form a helical membrane-spanning segment. A topological domain (extracellular) is located at residue Ala-793. Residues 794-811 (LPWYVAATVISIAHIDSL) form a discontinuously helical membrane-spanning segment. Over 812-833 (KMETETSAPGEQPKFLGVREQR) the chain is Cytoplasmic. The chain crosses the membrane as a helical span at residues 834-850 (VTGTVVFLLTGLSVFMA). The Extracellular segment spans residues 851–857 (PILKFIP). The helical transmembrane segment at 858–874 (MPVLYGVFLYMGVASLN) threads the bilayer. Topologically, residues 875-916 (GVQFMDRLKLLLMPPKYQPDFIYLRHVPLRRVHLFTFLQVVC) are cytoplasmic. The segment at residues 917-942 (LAMLWILKSTVAAIIFPVMILALVAV) is an intramembrane region (discontinuously helical). At 943 to 1035 (RKAMDYFFSQ…PTFLERHTSC (93 aa)) the chain is on the cytoplasmic side. Residues 968-1035 (KKKEDEKKKK…PTFLERHTSC (68 aa)) form a disordered region. Positions 1007–1035 (IMEKEPFLIDSKPSDRENSPTFLERHTSC) are enriched in basic and acidic residues.

The protein belongs to the anion exchanger (TC 2.A.31) family. In terms of assembly, homodimer. In terms of tissue distribution, expressed in kidney and to a lower extent in bladder, brain, intestine, large intestine and eye.

It is found in the basolateral cell membrane. Its subcellular location is the cell membrane. The catalysed reaction is 2 hydrogencarbonate(out) + Na(+)(out) = 2 hydrogencarbonate(in) + Na(+)(in). The enzyme catalyses 3 hydrogencarbonate(out) + Na(+)(out) = 3 hydrogencarbonate(in) + Na(+)(in). In terms of biological role, electrogenic sodium/bicarbonate cotransporter with a Na(+):HCO3(-) stoichiometry varying from 1:2 to 1:3. May regulate bicarbonate influx/efflux at the basolateral membrane of cells and regulate intracellular pH. In Ambystoma tigrinum (Eastern tiger salamander), this protein is Electrogenic sodium bicarbonate cotransporter 1 (SLC4A4).